The primary structure comprises 196 residues: Imidazoleglycerol-phosphate dehydratase (196 aa).

Belongs to the imidazoleglycerol-phosphate dehydratase family.

Its subcellular location is the cytoplasm. The enzyme catalyses D-erythro-1-(imidazol-4-yl)glycerol 3-phosphate = 3-(imidazol-4-yl)-2-oxopropyl phosphate + H2O. The protein operates within amino-acid biosynthesis; L-histidine biosynthesis; L-histidine from 5-phospho-alpha-D-ribose 1-diphosphate: step 6/9. The polypeptide is Imidazoleglycerol-phosphate dehydratase (Clostridium botulinum (strain ATCC 19397 / Type A)).